The primary structure comprises 155 residues: Ribosomal RNA large subunit methyltransferase H (155 aa).

S-adenosyl-L-methionine is bound by residues Leu-72, Gly-103, and 122–127 (LSPLTL).

Belongs to the RNA methyltransferase RlmH family. In terms of assembly, homodimer.

The protein localises to the cytoplasm. The catalysed reaction is pseudouridine(1915) in 23S rRNA + S-adenosyl-L-methionine = N(3)-methylpseudouridine(1915) in 23S rRNA + S-adenosyl-L-homocysteine + H(+). Functionally, specifically methylates the pseudouridine at position 1915 (m3Psi1915) in 23S rRNA. The chain is Ribosomal RNA large subunit methyltransferase H from Aeromonas hydrophila subsp. hydrophila (strain ATCC 7966 / DSM 30187 / BCRC 13018 / CCUG 14551 / JCM 1027 / KCTC 2358 / NCIMB 9240 / NCTC 8049).